The primary structure comprises 470 residues: Sulfate adenylyltransferase subunit 1 (470 aa).

Positions 22–238 (KELLRFITCG…ETIKIDYAYT (217 aa)) constitute a tr-type G domain. Positions 31–38 (GSVDDGKS) are G1. 31–38 (GSVDDGKS) contacts GTP. A G2 region spans residues 89-93 (GITID). The segment at 110 to 113 (DTPG) is G3. GTP contacts are provided by residues 110-114 (DTPGH) and 165-168 (NKMD). The tract at residues 165–168 (NKMD) is G4. The G5 stretch occupies residues 202–204 (SAL).

The protein belongs to the TRAFAC class translation factor GTPase superfamily. Classic translation factor GTPase family. CysN/NodQ subfamily. As to quaternary structure, heterodimer composed of CysD, the smaller subunit, and CysN.

It carries out the reaction sulfate + ATP + H(+) = adenosine 5'-phosphosulfate + diphosphate. It participates in sulfur metabolism; hydrogen sulfide biosynthesis; sulfite from sulfate: step 1/3. In terms of biological role, with CysD forms the ATP sulfurylase (ATPS) that catalyzes the adenylation of sulfate producing adenosine 5'-phosphosulfate (APS) and diphosphate, the first enzymatic step in sulfur assimilation pathway. APS synthesis involves the formation of a high-energy phosphoric-sulfuric acid anhydride bond driven by GTP hydrolysis by CysN coupled to ATP hydrolysis by CysD. This Francisella tularensis subsp. tularensis (strain WY96-3418) protein is Sulfate adenylyltransferase subunit 1.